The primary structure comprises 183 residues: UPF0397 protein VFMJ11_1662 (183 aa).

Transmembrane regions (helical) follow at residues 8-28 (VVVIAIGAALYGIGGLPMFGI), 41-61 (AVLALFSVLYGPIVGFLVGFI), 75-95 (WLTWVLGSGIVGMIIGLFPII), 110-130 (FLIFVVLAFFGNVFGYGTSAF), and 147-167 (LCIIAAGNTFLIAIVGYFILN).

This sequence belongs to the UPF0397 family.

It localises to the cell membrane. The protein is UPF0397 protein VFMJ11_1662 of Aliivibrio fischeri (strain MJ11) (Vibrio fischeri).